The chain runs to 170 residues: Adenine phosphoribosyltransferase (170 aa).

The protein belongs to the purine/pyrimidine phosphoribosyltransferase family. As to quaternary structure, homodimer.

It is found in the cytoplasm. It catalyses the reaction AMP + diphosphate = 5-phospho-alpha-D-ribose 1-diphosphate + adenine. The protein operates within purine metabolism; AMP biosynthesis via salvage pathway; AMP from adenine: step 1/1. Functionally, catalyzes a salvage reaction resulting in the formation of AMP, that is energically less costly than de novo synthesis. The protein is Adenine phosphoribosyltransferase of Lactococcus lactis subsp. cremoris (strain MG1363).